The sequence spans 155 residues: Transcriptional repressor NrdR (155 aa).

Residues cysteine 3–cysteine 34 fold into a zinc finger. The region spanning proline 49–glutamate 139 is the ATP-cone domain.

This sequence belongs to the NrdR family. It depends on Zn(2+) as a cofactor.

Functionally, negatively regulates transcription of bacterial ribonucleotide reductase nrd genes and operons by binding to NrdR-boxes. The sequence is that of Transcriptional repressor NrdR from Anaeromyxobacter dehalogenans (strain 2CP-1 / ATCC BAA-258).